Consider the following 115-residue polypeptide: uncharacterized protein (115 aa).

This is an uncharacterized protein from Treponema pallidum (strain Nichols).